The chain runs to 129 residues: DNA-directed RNA polymerase III subunit rpc9 (129 aa).

It belongs to the eukaryotic RPC9 RNA polymerase subunit family. As to quaternary structure, component of the RNA polymerase III (Pol III) complex.

It is found in the cytoplasm. It localises to the nucleus. In terms of biological role, DNA-dependent RNA polymerase catalyzes the transcription of DNA into RNA using the four ribonucleoside triphosphates as substrates. Specific peripheric component of RNA polymerase III which synthesizes small RNAs, such as 5S rRNA and tRNAs. This is DNA-directed RNA polymerase III subunit rpc9 (rpc17) from Schizosaccharomyces pombe (strain 972 / ATCC 24843) (Fission yeast).